Here is a 165-residue protein sequence, read N- to C-terminus: uncharacterized protein (165 aa).

Residues 51-102 form a disordered region; sequence KQAAVEPGARGGERPTGSQAGVTDTPDSAPFQRRSRAPRAREQAAQAGLNQK. The span at 66–76 shows a compositional bias: polar residues; that stretch reads TGSQAGVTDTP.

This is an uncharacterized protein from Mus musculus (Mouse).